The sequence spans 101 residues: NAD(P)H-quinone oxidoreductase subunit 4L, chloroplastic (101 aa).

The next 3 membrane-spanning stretches (helical) occupy residues 2 to 22 (MLEH…YGLI), 32 to 52 (MCLE…SDFF), and 61 to 81 (IFSI…LAIV).

Belongs to the complex I subunit 4L family. As to quaternary structure, NDH is composed of at least 16 different subunits, 5 of which are encoded in the nucleus.

Its subcellular location is the plastid. The protein localises to the chloroplast thylakoid membrane. It catalyses the reaction a plastoquinone + NADH + (n+1) H(+)(in) = a plastoquinol + NAD(+) + n H(+)(out). It carries out the reaction a plastoquinone + NADPH + (n+1) H(+)(in) = a plastoquinol + NADP(+) + n H(+)(out). In terms of biological role, NDH shuttles electrons from NAD(P)H:plastoquinone, via FMN and iron-sulfur (Fe-S) centers, to quinones in the photosynthetic chain and possibly in a chloroplast respiratory chain. The immediate electron acceptor for the enzyme in this species is believed to be plastoquinone. Couples the redox reaction to proton translocation, and thus conserves the redox energy in a proton gradient. This Daucus carota (Wild carrot) protein is NAD(P)H-quinone oxidoreductase subunit 4L, chloroplastic.